We begin with the raw amino-acid sequence, 369 residues long: Anhydro-N-acetylmuramic acid kinase (369 aa).

12–19 (GTSMDGVD) contacts ATP.

This sequence belongs to the anhydro-N-acetylmuramic acid kinase family.

It carries out the reaction 1,6-anhydro-N-acetyl-beta-muramate + ATP + H2O = N-acetyl-D-muramate 6-phosphate + ADP + H(+). It functions in the pathway amino-sugar metabolism; 1,6-anhydro-N-acetylmuramate degradation. Its pathway is cell wall biogenesis; peptidoglycan recycling. Functionally, catalyzes the specific phosphorylation of 1,6-anhydro-N-acetylmuramic acid (anhMurNAc) with the simultaneous cleavage of the 1,6-anhydro ring, generating MurNAc-6-P. Is required for the utilization of anhMurNAc either imported from the medium or derived from its own cell wall murein, and thus plays a role in cell wall recycling. The chain is Anhydro-N-acetylmuramic acid kinase from Shewanella sp. (strain W3-18-1).